Consider the following 208-residue polypeptide: Large ribosomal subunit protein uL4 (208 aa).

The tract at residues Arg-45–His-95 is disordered. Positions Gly-69–Ser-80 are enriched in polar residues.

It belongs to the universal ribosomal protein uL4 family. Part of the 50S ribosomal subunit.

In terms of biological role, one of the primary rRNA binding proteins, this protein initially binds near the 5'-end of the 23S rRNA. It is important during the early stages of 50S assembly. It makes multiple contacts with different domains of the 23S rRNA in the assembled 50S subunit and ribosome. Forms part of the polypeptide exit tunnel. This is Large ribosomal subunit protein uL4 from Chlorobium chlorochromatii (strain CaD3).